The primary structure comprises 153 residues: Ribonuclease H (153 aa).

The region spanning 4 to 146 is the RNase H type-1 domain; sequence NNEIVEIYTD…CDRLATEQIK (143 aa). The Mg(2+) site is built by D13, E51, D73, and D138.

It belongs to the RNase H family. As to quaternary structure, monomer. The cofactor is Mg(2+).

It localises to the cytoplasm. The enzyme catalyses Endonucleolytic cleavage to 5'-phosphomonoester.. Functionally, endonuclease that specifically degrades the RNA of RNA-DNA hybrids. This is Ribonuclease H from Caldanaerobacter subterraneus subsp. tengcongensis (strain DSM 15242 / JCM 11007 / NBRC 100824 / MB4) (Thermoanaerobacter tengcongensis).